Reading from the N-terminus, the 119-residue chain is Large ribosomal subunit protein bL20 (119 aa).

It belongs to the bacterial ribosomal protein bL20 family.

In terms of biological role, binds directly to 23S ribosomal RNA and is necessary for the in vitro assembly process of the 50S ribosomal subunit. It is not involved in the protein synthesizing functions of that subunit. The sequence is that of Large ribosomal subunit protein bL20 from Clostridium beijerinckii (strain ATCC 51743 / NCIMB 8052) (Clostridium acetobutylicum).